Reading from the N-terminus, the 242-residue chain is MSISCLSASAAKALDAELMSAGAFSIDQLMELAGLSVSQAVYREYPPSQYSQVLICCGPGNNGGDGLVAARHLWQYGYKPTVYYPKPSSPELYKRLCKQLDDLDIPVVKSHDSNHFSQLLRDSKLVVDSIFGFSFKGPVRDPFGSILAAIVESKIKVLSVDAPSSWEIDEGPQKEGPLKDFDPDTLISLTAPKPCSKFYKGKHYLGGRFVSKVITKKFNLSLPPYPGIDQVVDITNKPLSMV.

One can recognise a YjeF N-terminal domain in the interval 11–221; that stretch reads AKALDAELMS…KVITKKFNLS (211 aa). A (6S)-NADPHX-binding site is contributed by 61–65; sequence NNGGD. K(+) is bound by residues N62 and D128. Residues 132–138 and D161 each bind (6S)-NADPHX; that span reads GFSFKGP. Residue S164 coordinates K(+).

The protein belongs to the NnrE/AIBP family. The cofactor is K(+).

It is found in the cytoplasm. It localises to the mitochondrion. The protein localises to the nucleus. The enzyme catalyses (6R)-NADHX = (6S)-NADHX. It catalyses the reaction (6R)-NADPHX = (6S)-NADPHX. Functionally, catalyzes the epimerization of the S- and R-forms of NAD(P)HX, a damaged form of NAD(P)H that is a result of enzymatic or heat-dependent hydration. This is a prerequisite for the S-specific NAD(P)H-hydrate dehydratase to allow the repair of both epimers of NAD(P)HX. May have a role in meiosis. The protein is NAD(P)H-hydrate epimerase (mug182) of Schizosaccharomyces pombe (strain 972 / ATCC 24843) (Fission yeast).